A 193-amino-acid polypeptide reads, in one-letter code: Bcl-2-binding component 3 (193 aa).

Disordered stretches follow at residues 1–32 (MARA…RLMP) and 71–131 (ALGG…VEEE). The residue at position 10 (S10) is a Phosphoserine. A BH3 motif is present at residues 137–151 (IGAQLRRMADDLNAQ).

Belongs to the Bcl-2 family. In terms of assembly, interacts with MCL1 and BCL2A1. Interacts (via BH3 domain) with BCL2 and BCL2L1/BCL-XL. Interacts (via BH3 domain) with NOL3/ARC (via CARD domain); this interaction prevents BBC3 association with BCL2 and results in CASP8 activation.

The protein localises to the mitochondrion. Essential mediator of p53/TP53-dependent and p53/TP53-independent apoptosis. Promotes partial unfolding of BCL2L1 and dissociation of BCL2L1 from p53/TP53, releasing the bound p53/TP53 to induce apoptosis. Regulates ER stress-induced neuronal apoptosis. This Rattus norvegicus (Rat) protein is Bcl-2-binding component 3 (Bbc3).